A 117-amino-acid chain; its full sequence is Small ribosomal subunit protein uS17 (117 aa).

Belongs to the universal ribosomal protein uS17 family. As to quaternary structure, part of the 30S ribosomal subunit.

Its function is as follows. One of the primary rRNA binding proteins, it binds specifically to the 5'-end of 16S ribosomal RNA. This is Small ribosomal subunit protein uS17 from Methanocaldococcus jannaschii (strain ATCC 43067 / DSM 2661 / JAL-1 / JCM 10045 / NBRC 100440) (Methanococcus jannaschii).